Here is a 739-residue protein sequence, read N- to C-terminus: MATLPAEPSAGPAAGGEAVAAAAATEEEEEEARQLLQTLQAAEGEAAAAAGAGAGAAAAGAEGPGSPGVPGSPPEAASEPPTGLRFSPEQVACVCEALLQAGHAGRLSRFLGALPPAERLRGSDPVLRARALVAFQRGEYAELYRLLESRPFPAAHHAFLQDLYLRARYHEAERARGRALGAVDKYRLRKKFPLPKTIWDGEETVYCFKERSRAALKACYRGNRYPTPDEKRRLATLTGLSLTQVSNWFKNRRQRDRTGAGGGAPCKSESDGNPTTEDESSRSPEDLERGAAPVSAEAAAQGSIFLAGTGPPAPCPASSSILVNGSFLAASGSPAVLLNGGPVIINGLALGEASSLGPLLLTGGGGAPPPQPSPQGASETKTSLVLDPQTGEVRLEEAQSEAPETKGAQVAAPGPALGEEVLGPLAQVVPGPPTAATFPLPPGPVPAVAAPQVVPLSPPPGYPTGLSPTSPLLNLPQVVPTSQVVTLPQAVGPLQLLAAGPGSPVKVAAAAGPANVHLINSGVGVTALQLPSATAPGNFLLANPVSGSPIVTGVALQQGKIILTATFPTSMLVSQVLPPAPGLALPLKPETAISVPEGGLPVAPSPALPEAHALGTLSAQQPPPAAATTSSTSLPFSPDSPGLLPNFPAPPPEGLMLSPAAVPVWSAGLELSAGTEGLLEAEKGLGTQAPHTVLRLPDPDPEGLLLGATAGGEVDEGLEAEAKVLTQLQSVPVEEPLEL.

Composition is skewed to low complexity over residues 1 to 24 (MATL…AAAA), 34 to 61 (QLLQ…AAGA), and 74 to 83 (PEAASEPPTG). Disordered regions lie at residues 1-84 (MATL…PTGL), 251-294 (NRRQ…AAPV), 361-381 (LTGG…SETK), and 617-650 (LSAQ…FPAP). The homeobox DNA-binding region spans 201-260 (GEETVYCFKERSRAALKACYRGNRYPTPDEKRRLATLTGLSLTQVSNWFKNRRQRDRTGA). The segment covering 279-289 (ESSRSPEDLER) has biased composition (basic and acidic residues). Positions 617–646 (LSAQQPPPAAATTSSTSLPFSPDSPGLLPN) are enriched in low complexity.

This sequence belongs to the SIX/Sine oculis homeobox family. Probably binds DNA dimer. Interacts with EYA3, and probably EYA1 and EYA2. As to expression, expressed in adult but not in fetal eyes. Found in corneal epithelium and endothelium, lens epithelium, ciliary body epithelia, cellular layers of the retina and the sclera.

It is found in the cytoplasm. It localises to the nucleus. In terms of biological role, transcription factor that is thought to be involved in regulation of organogenesis. May be involved in determination and maintenance of retina formation. Binds a 5'-GGTGTCAG-3' motif present in the ARE regulatory element of ATP1A1. Binds a 5'-TCA[AG][AG]TTNC-3' motif present in the MEF3 element in the myogenin promoter, and in the IGFBP5 promoter. Thought to be regulated by association with Dach and Eya proteins, and seems to be coactivated by EYA1, EYA2 and EYA3. This chain is Homeobox protein SIX5 (SIX5), found in Homo sapiens (Human).